We begin with the raw amino-acid sequence, 269 residues long: Hemin import ATP-binding protein HmuV (269 aa).

The ABC transporter domain occupies 2–242 (LEVIHTGLNI…AMVEACFDLP (241 aa)). 34–41 (GPNGAGKS) contacts ATP.

It belongs to the ABC transporter superfamily. Heme (hemin) importer (TC 3.A.1.14.5) family. In terms of assembly, the complex is composed of two ATP-binding proteins (HmuV), two transmembrane proteins (HmuU) and a solute-binding protein (HmuT).

The protein resides in the cell inner membrane. Part of the ABC transporter complex HmuTUV involved in hemin import. Responsible for energy coupling to the transport system. In Methylobacillus flagellatus (strain ATCC 51484 / DSM 6875 / VKM B-1610 / KT), this protein is Hemin import ATP-binding protein HmuV.